The following is a 635-amino-acid chain: Chaperone protein HtpG (635 aa).

Residues 1 to 343 form an a; substrate-binding region; it reads MTAEATVETR…SNDLSLNVSR (343 aa). Residues 344-560 form a b region; sequence EILQQDPNID…EHDMGAQMRR (217 aa). The segment at 561–635 is c; it reads LLEAAGQAVP…LNKLLLELSN (75 aa).

The protein belongs to the heat shock protein 90 family. As to quaternary structure, homodimer.

It localises to the cytoplasm. In terms of biological role, molecular chaperone. Has ATPase activity. The protein is Chaperone protein HtpG of Saccharophagus degradans (strain 2-40 / ATCC 43961 / DSM 17024).